Here is a 353-residue protein sequence, read N- to C-terminus: Alanine racemase (353 aa).

K34 (proton acceptor; specific for D-alanine) is an active-site residue. The residue at position 34 (K34) is an N6-(pyridoxal phosphate)lysine. R128 is a substrate binding site. Y251 (proton acceptor; specific for L-alanine) is an active-site residue. Position 299 (M299) interacts with substrate.

This sequence belongs to the alanine racemase family. The cofactor is pyridoxal 5'-phosphate.

The catalysed reaction is L-alanine = D-alanine. It participates in amino-acid biosynthesis; D-alanine biosynthesis; D-alanine from L-alanine: step 1/1. Functionally, catalyzes the interconversion of L-alanine and D-alanine. May also act on other amino acids. The polypeptide is Alanine racemase (alr) (Alcanivorax borkumensis (strain ATCC 700651 / DSM 11573 / NCIMB 13689 / SK2)).